A 582-amino-acid chain; its full sequence is Glutamine--tRNA ligase (582 aa).

Residues 50–60 carry the 'HIGH' region motif; it reads PEPNGYLHIGH. Residues 51–53 and 57–63 each bind ATP; these read EPN and HIGHAKS. L-glutamine contacts are provided by Asp83 and Tyr235. ATP contacts are provided by residues Thr254 and 289 to 290; that span reads RL. The 'KMSKS' region motif lies at 296–300; the sequence is ITSKR.

It belongs to the class-I aminoacyl-tRNA synthetase family. As to quaternary structure, monomer.

It localises to the cytoplasm. The catalysed reaction is tRNA(Gln) + L-glutamine + ATP = L-glutaminyl-tRNA(Gln) + AMP + diphosphate. This chain is Glutamine--tRNA ligase, found in Cupriavidus metallidurans (strain ATCC 43123 / DSM 2839 / NBRC 102507 / CH34) (Ralstonia metallidurans).